The chain runs to 308 residues: 50 kDa gamma-zein (308 aa).

Positions 1–19 (MKLVLVVLAFIALVSSVSC) are cleaved as a signal peptide. The segment at 27–159 (CGQQQSHEQQ…QPQQPQQYQQ (133 aa)) is disordered. A compositionally biased stretch (low complexity) spans 55–119 (HHQQQQHQQQ…QHHQQSQGHV (65 aa)). Residues 120–129 (QQHEQSHEQH) are compositionally biased toward basic and acidic residues. The span at 130 to 159 (QGQSHEQQHQQQFQGHDKQQQPQQPQQYQQ) shows a compositional bias: low complexity. Residue Cys-286 is the site of GPI-anchor amidated cysteine attachment. The propeptide at 287-308 (GLYHSYYQNNPCSSNDISGVCN) is removed in mature form.

Belongs to the gliadin/glutenin family. In terms of assembly, interacts with OP10 (via N-terminus).

The protein resides in the cell membrane. In terms of biological role, zeins are major seed storage proteins. The protein is 50 kDa gamma-zein of Zea mays (Maize).